The primary structure comprises 828 residues: MQDRNLIDVNLTSEMKTSFIDYAMSVIVARALPDVRDGLKPVHRRILYGMNELGVTPDKPHKKSARITGDVMGKYHPHGDSSIYEAMVRMAQWWSYRHMLVDGHGNFGSMDGDGAAAQRYTEARMSKIALELLRDINKNTVNFQDNYDGSEREPVVLPARFPNLLVNGATGIAVGMATNIPPHNLAESIDAVKMVMEHPDCTTRELMEVIPGPDFPTGALVMGRSGIHRAYDTGKGSIVLRSRTEIETTQTGRERIVVTEFPYGVNKTKVHEHIVRLAQEKRLEGITAVRDESSREGVRFVIEIRREASATVILNNLFKLTSLQTNFSFNMLAIENGVPKILSLRQIIDNYISHQKEVIIRRTRFDKDKAEARAHILEGLLIALDHLDEVIAIIRNSETDVIAQTELMSRFDLSERQSQAILDMRLRRLTGLERDKIQSEYDDLLALIADLSDILAKPERIITIIKEEMDEIKRKYANPRRTELMVGEVLSLEDEDLIEEEDVLITLSNKGYIKRLAQDEFRAQKRGGRGVQGTGVNNDDFVRELVSTSTHDTLLFFTNFGRVYRLKAYEIPEYGRTAKGLPIVNLLKLEDGETIQTIINARKEETAGKSFFFTTKQGIVKRTEVSEFNNIRQNGLRALKLKEGDQLINVLLTSGQDDIIIGTHSGYSVRFNEASIRNMGRSATGVRGVKLREDDRVVGASRIRDNQEVLVITENGFGKRTSATDYPTKGRGGKGIKTANITPKNGQLAGLVTVDGTEDIMVITNKGVIIRTNVANISQTGRATLGVKIMKLDADAKIVTFTLVQPEDSSIAEINTDRENSISKNKDN.

The Topo IIA-type catalytic domain occupies 32–497 (LPDVRDGLKP…EVLSLEDEDL (466 aa)). Residue Y120 is the O-(5'-phospho-DNA)-tyrosine intermediate of the active site. The GyrA-box signature appears at 524-530 (QKRGGRG).

It belongs to the type II topoisomerase GyrA/ParC subunit family. Heterotetramer, composed of two GyrA and two GyrB chains. In the heterotetramer, GyrA contains the active site tyrosine that forms a transient covalent intermediate with DNA, while GyrB binds cofactors and catalyzes ATP hydrolysis.

Its subcellular location is the cytoplasm. The enzyme catalyses ATP-dependent breakage, passage and rejoining of double-stranded DNA.. A type II topoisomerase that negatively supercoils closed circular double-stranded (ds) DNA in an ATP-dependent manner to modulate DNA topology and maintain chromosomes in an underwound state. Negative supercoiling favors strand separation, and DNA replication, transcription, recombination and repair, all of which involve strand separation. Also able to catalyze the interconversion of other topological isomers of dsDNA rings, including catenanes and knotted rings. Type II topoisomerases break and join 2 DNA strands simultaneously in an ATP-dependent manner. This Streptococcus pyogenes serotype M6 (strain ATCC BAA-946 / MGAS10394) protein is DNA gyrase subunit A.